The following is a 1444-amino-acid chain: MKNKGAKQKLKRKGAASAFGCDLTEYLESSGQDVPYVLKSCAEFIETHGIVDGIYRLSGVTSNIQRLRQEFGSDQCPDLTREVYLQDIHCVGSLCKLYFRELPNPLLTYELYEKFTEAVSHCPEEGQLARIQNVIQELPPSHYRTLEYLIRHLAHIASFSSKTNMHARNLALVWAPNLLRSKEIEATGCNGDAAFLAVRVQQVVIEFILNHVDQIFNNGAPGSLENDENRPIMKSLTLPALSLPMKLVSLEEAQARSLATNHPARKERRENSLPEIVPPMGTLFHTVLELPDNKRKLSSKSKKWKSIFNLGRSGSDSKSKLSRNGSVFVRGQRLSVEKATIRPAKSMDSLCSVPVEGKETKGNFNRTVTTGGFFIPATKMHSTGTGSSCDLTKQEGEWGQEGMPPGAEGGFDVSSDRSHLQGAQARPPPEQLKVFRPVEDPESEQTAPKMLGMFYTSNDSPSKSVFTSSLFQMEPSPRNQRKALNISEPFAVSVPLRVSAVISTNSTPCRTPPKELQSLSSLEEFSFHGSESGGWPEEEKPLGAETSAASVPKKAGLEDAKAVPEAPGTVECSKGLSQEPGAHLEEKKTPESSLSSQHLNELEKRPNPEKVVEEGREAGEMESSTLQESPRARAEAVLLHEMDEDDLANALIWPEIQQELKIIESEEELSSLPPPALKTSPIQPILESSLGPFIPSEPPGSLPCGSFPAPVSTPLEVWTRDPANQSTQGASTAASREKPEPEQGLHPDLASLAPLEIVPFEKASPQATVEVGGPGNLSPPLPPAPPPPTPLEESTPVLLSKGGPEREDSSRKLRTDLYIDQLKSQDSPEISSLCQGEEATPRHSDKQNSKNAASEGKGCGFPSPTREVEIVSQEEEDVTHSVQEPSDCDEDDTVTDIAQHGLEMVEPWEEPQWVTSPLHSPTLKDAHKAQVQGLQGHQLEKRLSHRPSLRQSHSLDSKPTVKSQWTLEVPSSSSCANLETERNSDPLQPQAPRREITGWDEKALRSFREFSGLKGAEAPPNQKGPSGVQPNPAETSPISLAEGKELGTHLGHSSPQIRQGGVPGPESSKESSPSVQDSTSPGEHPAKLQLKSTECGPPKGKNRPSSLNLDPAIPIADLFWFENVASFSSPGMQVSEPGDPKVTWMTSSYCKADPWRVYSQDPQDLDIVAHALTGRRNSAPVSVSAVRTSFMVKMCQARAVPVIPPKIQYTQIPQPLPSQSSGENGVQPLERSQEGPSSTSGTTQKPAKDDSPSSLESSKEEKPKQDPGAIKSSPVDATAPCMCEGPTLSPEPGSSNLLSTQDAVVQCRKRMSETEPSGDNLLSSKLERPSGGSKPFHRSRPGRPQSLILFSPPFPIMDHLPPSSTVTDSKVLLSPIRSPTQTVSPGLLCGELAENTWVTPEGVTLRNKMTIPKNGQRLETSTSCFYQPQRRSVILDGRSGRQIE.

The Rho-GAP domain occupies 21 to 216; it reads CDLTEYLESS…FILNHVDQIF (196 aa). At Ser272 the chain carries Phosphoserine. At Thr286 the chain carries Phosphothreonine. Phosphoserine occurs at positions 346, 349, and 387. The disordered stretch occupies residues 398–427; that stretch reads WGQEGMPPGAEGGFDVSSDRSHLQGAQARP. Ser476 carries the phosphoserine modification. The disordered stretch occupies residues 504–631; that stretch reads TNSTPCRTPP…ESSTLQESPR (128 aa). Residues 515-534 are compositionally biased toward low complexity; that stretch reads ELQSLSSLEEFSFHGSESGG. Residues 600–619 show a composition bias toward basic and acidic residues; it reads NELEKRPNPEKVVEEGREAG. Thr679 bears the Phosphothreonine mark. Disordered regions lie at residues 688-893 and 906-1108; these read SSLG…EDDT and EPWE…SSLN. Residues Ser701 and Ser712 each carry the phosphoserine modification. Positions 722–734 are enriched in polar residues; the sequence is PANQSTQGASTAA. Over residues 735–745 the composition is skewed to basic and acidic residues; the sequence is SREKPEPEQGL. The span at 777–790 shows a compositional bias: pro residues; the sequence is LSPPLPPAPPPPTP. The residue at position 778 (Ser778) is a Phosphoserine. Thr789 carries the phosphothreonine modification. The span at 803–817 shows a compositional bias: basic and acidic residues; that stretch reads GPEREDSSRKLRTDL. The span at 822 to 834 shows a compositional bias: polar residues; the sequence is LKSQDSPEISSLC. Positions 839-848 are enriched in basic and acidic residues; sequence ATPRHSDKQN. A compositionally biased stretch (polar residues) spans 960-977; that stretch reads TVKSQWTLEVPSSSSCAN. Ser974 carries the phosphoserine modification. Basic and acidic residues predominate over residues 992–1008; the sequence is PRREITGWDEKALRSFR. The span at 1028–1038 shows a compositional bias: polar residues; that stretch reads VQPNPAETSPI. The segment covering 1064–1075 has biased composition (low complexity); it reads GPESSKESSPSV. Ser1105, Ser1106, and Ser1178 each carry phosphoserine. 2 stretches are compositionally biased toward polar residues: residues 1211–1224 and 1234–1245; these read QIPQ…SGEN and EGPSSTSGTTQK. A disordered region spans residues 1211 to 1346; it reads QIPQPLPSQS…HRSRPGRPQS (136 aa). A compositionally biased stretch (basic and acidic residues) spans 1246–1265; that stretch reads PAKDDSPSSLESSKEEKPKQ. 2 stretches are compositionally biased toward polar residues: residues 1292-1303 and 1314-1323; these read PGSSNLLSTQDA and TEPSGDNLLS.

As to quaternary structure, interacts with ITSN1, which inhibits GAP activity. Interacts with PARVA. Interacts with GTP-loaded RHOU. In terms of processing, phosphorylation on Thr-789 reduces GAP activity.

Its subcellular location is the cell projection. It is found in the lamellipodium. It localises to the cell junction. The protein resides in the focal adhesion. Functionally, functions as a GTPase-activating protein (GAP) for RAC1 and CDC42. Required for cell spreading, polarized lamellipodia formation and cell migration. The sequence is that of Rho GTPase-activating protein 31 (ARHGAP31) from Homo sapiens (Human).